Reading from the N-terminus, the 293-residue chain is Proline iminopeptidase (293 aa).

The Nucleophile role is filled by S105. D244 is an active-site residue. H271 functions as the Proton donor in the catalytic mechanism.

It belongs to the peptidase S33 family. In terms of assembly, part of the tricorn proteolytic complex.

It catalyses the reaction Release of N-terminal proline from a peptide.. Functionally, cleaves H-Pro-AMC as well as a wide spectrum of amino acid substrates and several peptide substrates without a proline at the N-terminus. Proteases F1, F2 and F3 degrade oligopeptides produced by Tricorn (themselves probably produced by the proteasome) yielding free amino acids. This Thermoplasma acidophilum (strain ATCC 25905 / DSM 1728 / JCM 9062 / NBRC 15155 / AMRC-C165) protein is Proline iminopeptidase (pip).